Here is a 154-residue protein sequence, read N- to C-terminus: Endoribonuclease YbeY (154 aa).

His-114, His-118, and His-124 together coordinate Zn(2+).

The protein belongs to the endoribonuclease YbeY family. It depends on Zn(2+) as a cofactor.

It localises to the cytoplasm. Functionally, single strand-specific metallo-endoribonuclease involved in late-stage 70S ribosome quality control and in maturation of the 3' terminus of the 16S rRNA. The polypeptide is Endoribonuclease YbeY (Haemophilus influenzae (strain ATCC 51907 / DSM 11121 / KW20 / Rd)).